Consider the following 58-residue polypeptide: Potassium channel toxin alpha-KTx BmKcug1a (58 aa).

Residues M1–A21 form the signal peptide. Residue Q22 is modified to Pyrrolidone carboxylic acid. 3 disulfides stabilise this stretch: C28-C49, C34-C54, and C38-C56.

It belongs to the short scorpion toxin superfamily. Potassium channel inhibitor family. Alpha-KTx 01 subfamily. In terms of tissue distribution, expressed by the venom gland.

It localises to the secreted. Potent blocker of both large-conductance calcium-activated potassium channels (KCa1.1/KCNMA1) and voltage-gated potassium channels (Kv1.3/KCNA3 and ERG1/Kv11.1/KCNH2). The chain is Potassium channel toxin alpha-KTx BmKcug1a from Olivierus martensii (Manchurian scorpion).